The primary structure comprises 188 residues: GTPase KRas (188 aa).

Residues 10–18 (GAGGVGKSA), 29–35 (VDEYDPT), 59–60 (AG), and 116–119 (NKYD) contribute to the GTP site. Residues 32–40 (YDPTIEDSY) carry the Effector region motif. Residues 167–188 (KEKMSKEGKKKKKKSKTKCILM) form a disordered region. Cys-185 carries the cysteine methyl ester modification. Cys-185 is lipidated: S-farnesyl cysteine. Positions 186-188 (ILM) are cleaved as a propeptide — removed in mature form.

The protein belongs to the small GTPase superfamily. Ras family.

It is found in the cell membrane. The protein resides in the cytoplasm. The enzyme catalyses GTP + H2O = GDP + phosphate + H(+). Alternates between an inactive form bound to GDP and an active form bound to GTP. Activated by a guanine nucleotide-exchange factor (GEF) and inactivated by a GTPase-activating protein (GAP). In terms of biological role, ras proteins bind GDP/GTP and possess intrinsic GTPase activity. Plays an important role in the regulation of cell proliferation. May play a role in promoting oncogenic events by inducing transcriptional silencing of tumor suppressor genes (TSGs). This is GTPase KRas (kras) from Kryptolebias marmoratus (Mangrove killifish).